The sequence spans 350 residues: uncharacterized protein (350 aa).

3 disordered regions span residues 1–21, 237–266, and 278–298; these read MDSF…SSLN, NSDV…PISP, and EMST…KKRT. 2 stretches are compositionally biased toward polar residues: residues 10-21 and 246-259; these read KPTTATSNSSLN and EDSS…TKPS. Positions 287-298 are enriched in basic residues; sequence SRSRTPSSKKRT.

The protein resides in the nucleus. This is an uncharacterized protein from Schizosaccharomyces pombe (strain 972 / ATCC 24843) (Fission yeast).